Reading from the N-terminus, the 812-residue chain is DNA translocase FtsK 1 (812 aa).

Basic residues predominate over residues 1-11 (MTEKSHKKTAK). Residues 1–36 (MTEKSHKKTAKGRAGSPSPTSARNKKADNGARGNKV) form a disordered region. Residues 25 to 36 (KKADNGARGNKV) show a composition bias toward basic and acidic residues. The next 5 membrane-spanning stretches (helical) occupy residues 63 to 83 (IGDA…ISLI), 116 to 136 (VGYY…CVVL), 156 to 176 (IAAA…YFVL), 184 to 204 (LPVG…AWLL), and 210 to 230 (LLII…ISWL). At 231 to 812 (EFLNGAGRAV…RKILAHKDHL (582 aa)) the chain is on the cytoplasmic side. Residues 461-670 (GTPVVGDLAK…FTVQSKIDSR (210 aa)) form the FtsK domain. 481–486 (GSGKSV) is an ATP binding site.

Belongs to the FtsK/SpoIIIE/SftA family. In terms of assembly, homohexamer. Forms a ring that surrounds DNA.

The protein localises to the cell inner membrane. Its function is as follows. Essential cell division protein that coordinates cell division and chromosome segregation. The N-terminus is involved in assembly of the cell-division machinery. The C-terminus functions as a DNA motor that moves dsDNA in an ATP-dependent manner towards the dif recombination site, which is located within the replication terminus region. Translocation stops specifically at Xer-dif sites, where FtsK interacts with the Xer recombinase, allowing activation of chromosome unlinking by recombination. FtsK orienting polar sequences (KOPS) guide the direction of DNA translocation. FtsK can remove proteins from DNA as it translocates, but translocation stops specifically at XerCD-dif site, thereby preventing removal of XerC and XerD from dif. The polypeptide is DNA translocase FtsK 1 (ftsK1) (Neisseria meningitidis serogroup B (strain ATCC BAA-335 / MC58)).